Consider the following 370-residue polypeptide: tRNA-specific 2-thiouridylase MnmA (370 aa).

Residues 6-13 (AMSGGVDS) and leucine 32 contribute to the ATP site. Cysteine 101 acts as the Nucleophile in catalysis. Residues cysteine 101 and cysteine 193 are joined by a disulfide bond. Glycine 125 contacts ATP. The tract at residues 143–145 (KDQ) is interaction with tRNA. The active-site Cysteine persulfide intermediate is cysteine 193.

This sequence belongs to the MnmA/TRMU family.

Its subcellular location is the cytoplasm. It carries out the reaction S-sulfanyl-L-cysteinyl-[protein] + uridine(34) in tRNA + AH2 + ATP = 2-thiouridine(34) in tRNA + L-cysteinyl-[protein] + A + AMP + diphosphate + H(+). Catalyzes the 2-thiolation of uridine at the wobble position (U34) of tRNA, leading to the formation of s(2)U34. The polypeptide is tRNA-specific 2-thiouridylase MnmA (Rhodococcus erythropolis (strain PR4 / NBRC 100887)).